The following is a 388-amino-acid chain: Granulocyte-macrophage colony-stimulating factor receptor subunit alpha (388 aa).

An N-terminal signal peptide occupies residues M1–A29. Residues L30–P327 are Extracellular-facing. N-linked (GlcNAc...) asparagine glycans are attached at residues N43, N63, N106, N132, N165, and N237. In terms of domain architecture, Fibronectin type-III spans P228–T324. The WSXWS motif motif lies at W310–S314. A helical transmembrane segment spans residues G328 to V348. Residues T349–P388 lie on the Cytoplasmic side of the membrane. The Box 1 motif signature appears at L359 to R367.

This sequence belongs to the type I cytokine receptor family. Type 5 subfamily. Heterodimer of an alpha and a beta subunit. The beta subunit is common to the IL3, IL5 and GM-CSF receptors. The signaling GM-CSF receptor complex is a dodecamer of two head-to-head hexamers of two alpha, two beta, and two ligand subunits.

Its subcellular location is the membrane. In terms of biological role, low affinity receptor for granulocyte-macrophage colony-stimulating factor. Transduces a signal that results in the proliferation, differentiation, and functional activation of hematopoietic cells. This is Granulocyte-macrophage colony-stimulating factor receptor subunit alpha (Csf2ra) from Mus musculus (Mouse).